We begin with the raw amino-acid sequence, 424 residues long: UPF0761 membrane protein Smlt0865 (424 aa).

6 helical membrane-spanning segments follow: residues 48-68 (VFAL…FPVF), 101-121 (SAGQ…LITL), 144-164 (FLVY…SLAV), 181-201 (WLAE…CITL), 216-236 (AVPG…GIGA), and 251-271 (VAFV…VLLG).

The protein belongs to the UPF0761 family.

The protein localises to the cell inner membrane. The chain is UPF0761 membrane protein Smlt0865 from Stenotrophomonas maltophilia (strain K279a).